A 301-amino-acid chain; its full sequence is MELISLFKQYLTVERQYSEKTVTAYLEDIDAFQKFLTDTGDKTDLLLVDRFDVNVYMSYLFDRHLARTSISRKVSALRSFYRFLVKNDLVDKNPFELVQLKKQSDKLPHFFYEKEMNMLFEAVYQAEGAQKLRNIAILEVLYGTGMRVSECAALQWSDIDFSMQTILVLGKGNKERYVPFGRYAKEALQNYRKNEWEPFLSKYKQTHNFVFINHYAKPITTTGIEYILNQVITASSLNGKIHPHMLRHSFATALLNNGADLRTVQELLGHSSLSTTQIYTHVTKEKLQESYRKYFPRSTDA.

One can recognise a Core-binding (CB) domain in the interval 1–85; the sequence is MELISLFKQY…ALRSFYRFLV (85 aa). The Tyr recombinase domain maps to 106–292; the sequence is KLPHFFYEKE…TKEKLQESYR (187 aa). Catalysis depends on residues Arg147, Lys171, His244, Arg247, and His270. Tyr279 serves as the catalytic O-(3'-phospho-DNA)-tyrosine intermediate.

Belongs to the 'phage' integrase family. XerC subfamily. As to quaternary structure, forms a cyclic heterotetrameric complex composed of two molecules of XerC and two molecules of XerD.

The protein resides in the cytoplasm. Functionally, site-specific tyrosine recombinase, which acts by catalyzing the cutting and rejoining of the recombining DNA molecules. The XerC-XerD complex is essential to convert dimers of the bacterial chromosome into monomers to permit their segregation at cell division. It also contributes to the segregational stability of plasmids. In Pediococcus pentosaceus (strain ATCC 25745 / CCUG 21536 / LMG 10740 / 183-1w), this protein is Tyrosine recombinase XerC.